The following is a 241-amino-acid chain: MKKLNLRQLKEHLYHGSLQDLDFSNLTSSAKAWLEREIKRIEEMKFYEKKLYEEGLNFIAGVDEAGRGPLVGPVVAACVILPKEIFIPEINDSKKLPEEKREKLAEVIKKEAISYGIGIVDCREIDEINILNATLKAMKKAIFEVKEKIEYLLVDAISIPDMPIKQLPIVKGDSKSISIAAASILAKVERDRIMREYHKLYPQYNFAKNKGYGTKEHIEALKKYGPCPIHRRTYVEKILKG.

The 185-residue stretch at 57–241 folds into the RNase H type-2 domain; it reads NFIAGVDEAG…RTYVEKILKG (185 aa). Residues D63, E64, and D155 each coordinate a divalent metal cation.

It belongs to the RNase HII family. Mn(2+) is required as a cofactor. The cofactor is Mg(2+).

Its subcellular location is the cytoplasm. It carries out the reaction Endonucleolytic cleavage to 5'-phosphomonoester.. Endonuclease that specifically degrades the RNA of RNA-DNA hybrids. The chain is Ribonuclease HII from Caldanaerobacter subterraneus subsp. tengcongensis (strain DSM 15242 / JCM 11007 / NBRC 100824 / MB4) (Thermoanaerobacter tengcongensis).